Consider the following 319-residue polypeptide: MLLWVLALLFLCAFLWNYKGQLKIADIADKYIFITGCDSGFGNLAARTFDRKGFRVIAACLTESGSEALKAKTSERLHTVLLDVTNPENVKETAQWVKSHVGEKGLWGLINNAGVLGVLAPTDWLTVDDYREPIEVNLFGLINVTLNMLPLVKKARGRVINVSSIGGRLAFGGGGYTPSKYAVEGFNDSLRRDMKAFGVHVSCIEPGLFKTGLADPIKTTEKKLAIWKHLSPDIKQQYGEGYIEKSLHRLKSSTSSVNLDLSLVVECMDHALTSLFPKTRYTAGKDAKTFWIPLSHMPAALQDFLLLKEKVELANPQAV.

Positions 1 to 20 (MLLWVLALLFLCAFLWNYKG) are cleaved as a signal peptide. Residues 34 to 58 (ITGC…RVIA) and D83 contribute to the NAD(+) site. S164 serves as a coordination point for substrate. Y176 serves as the catalytic Proton acceptor. K180 contacts NAD(+).

Belongs to the short-chain dehydrogenases/reductases (SDR) family. In terms of assembly, homotetramer. Highly expressed in epithelium of estrus uterus.

Its subcellular location is the microsome membrane. The protein resides in the endoplasmic reticulum membrane. It catalyses the reaction 3beta-hydroxy-5alpha-pregnane-20-one + NAD(+) = 5alpha-pregnane-3,20-dione + NADH + H(+). The enzyme catalyses 17beta-hydroxy-5alpha-androstan-3-one + NAD(+) = 5alpha-androstan-3,17-dione + NADH + H(+). It carries out the reaction androsterone + NAD(+) = 5alpha-androstan-3,17-dione + NADH + H(+). The catalysed reaction is 5alpha-androstane-3alpha,17beta-diol + NAD(+) = 17beta-hydroxy-5alpha-androstan-3-one + NADH + H(+). It catalyses the reaction all-trans-retinol + NAD(+) = all-trans-retinal + NADH + H(+). The enzyme catalyses 3alpha-hydroxy-5alpha-pregnan-20-one + NAD(+) = 5alpha-pregnane-3,20-dione + NADH + H(+). In terms of biological role, 3-alpha-hydroxysteroid dehydrogenase that converts 3-alpha-tetrahydroprogesterone (allopregnanolone) to dihydroxyprogesterone and 3-alpha-androstanediol to dihydroxyprogesterone. Plays also role in the biosynthesis of retinoic acid from retinaldehyde. Can utilize both NADH and NADPH. This Rattus norvegicus (Rat) protein is Dehydrogenase/reductase SDR family member 9 (Dhrs9).